A 427-amino-acid chain; its full sequence is Methylthioribose kinase 2 (427 aa).

ATP-binding positions include 49–53, Lys68, and 122–124; these read DGNLN and RYI. Position 51 (Asn51) interacts with substrate. Residue Asp243 coordinates substrate. 260–262 is an ATP binding site; that stretch reads DPE. Arg370 contributes to the substrate binding site.

It belongs to the methylthioribose kinase family. Homodimer.

It catalyses the reaction 5-(methylsulfanyl)-D-ribose + ATP = 5-(methylsulfanyl)-alpha-D-ribose 1-phosphate + ADP + H(+). Its pathway is amino-acid biosynthesis; L-methionine biosynthesis via salvage pathway; S-methyl-5-thio-alpha-D-ribose 1-phosphate from S-methyl-5'-thioadenosine (hydrolase route): step 2/2. Catalyzes the phosphorylation of methylthioribose into methylthioribose-1-phosphate. The chain is Methylthioribose kinase 2 (MTK2) from Oryza sativa subsp. japonica (Rice).